A 199-amino-acid polypeptide reads, in one-letter code: dITP/XTP pyrophosphatase (199 aa).

Position 8-13 (8-13 (TSNKNK)) interacts with substrate. Glu40 and Asp68 together coordinate Mg(2+). Asp68 (proton acceptor) is an active-site residue. Residues Ser69, 154–157 (FGYD), Lys177, and 182–183 (HR) contribute to the substrate site.

This sequence belongs to the HAM1 NTPase family. Homodimer. It depends on Mg(2+) as a cofactor.

The enzyme catalyses XTP + H2O = XMP + diphosphate + H(+). The catalysed reaction is dITP + H2O = dIMP + diphosphate + H(+). It catalyses the reaction ITP + H2O = IMP + diphosphate + H(+). Pyrophosphatase that catalyzes the hydrolysis of nucleoside triphosphates to their monophosphate derivatives, with a high preference for the non-canonical purine nucleotides XTP (xanthosine triphosphate), dITP (deoxyinosine triphosphate) and ITP. Seems to function as a house-cleaning enzyme that removes non-canonical purine nucleotides from the nucleotide pool, thus preventing their incorporation into DNA/RNA and avoiding chromosomal lesions. This chain is dITP/XTP pyrophosphatase, found in Wigglesworthia glossinidia brevipalpis.